A 473-amino-acid chain; its full sequence is Photosystem II CP43 reaction center protein (473 aa).

Residues 1–14 (MKTLYSLRRFYPVE) constitute a propeptide that is removed on maturation. N-acetylthreonine is present on T15. A Phosphothreonine modification is found at T15. 5 helical membrane-spanning segments follow: residues 69–93 (LFEV…PHLA), 134–155 (LIGP…KDRN), 178–200 (KALY…RKIT), 255–275 (KPFA…LSYS), and 291–312 (WFNN…ASQA). E367 is a binding site for [CaMn4O5] cluster. Residues 447 to 471 (RARAAAAGFEKGIDRDFEPVLSMTP) form a helical membrane-spanning segment.

The protein belongs to the PsbB/PsbC family. PsbC subfamily. PSII is composed of 1 copy each of membrane proteins PsbA, PsbB, PsbC, PsbD, PsbE, PsbF, PsbH, PsbI, PsbJ, PsbK, PsbL, PsbM, PsbT, PsbX, PsbY, PsbZ, Psb30/Ycf12, at least 3 peripheral proteins of the oxygen-evolving complex and a large number of cofactors. It forms dimeric complexes. Binds multiple chlorophylls and provides some of the ligands for the Ca-4Mn-5O cluster of the oxygen-evolving complex. It may also provide a ligand for a Cl- that is required for oxygen evolution. PSII binds additional chlorophylls, carotenoids and specific lipids. is required as a cofactor.

Its subcellular location is the plastid. It is found in the chloroplast thylakoid membrane. One of the components of the core complex of photosystem II (PSII). It binds chlorophyll and helps catalyze the primary light-induced photochemical processes of PSII. PSII is a light-driven water:plastoquinone oxidoreductase, using light energy to abstract electrons from H(2)O, generating O(2) and a proton gradient subsequently used for ATP formation. The chain is Photosystem II CP43 reaction center protein from Cryptomeria japonica (Japanese cedar).